Reading from the N-terminus, the 230-residue chain is PKHD-type hydroxylase PD_1553 (230 aa).

One can recognise a Fe2OG dioxygenase domain in the interval 78-182; that stretch reads RTLPPRFNRY…RIASFFWVQS (105 aa). Positions 96, 98, and 163 each coordinate Fe cation. A 2-oxoglutarate-binding site is contributed by Arg-173.

The cofactor is Fe(2+). L-ascorbate is required as a cofactor.

This chain is PKHD-type hydroxylase PD_1553, found in Xylella fastidiosa (strain Temecula1 / ATCC 700964).